The following is a 588-amino-acid chain: L-fucose isomerase (588 aa).

Active-site proton acceptor residues include Glu-335 and Asp-359. 3 residues coordinate Mn(2+): Glu-335, Asp-359, and His-525.

This sequence belongs to the L-fucose isomerase family. Mn(2+) serves as cofactor.

The protein localises to the cytoplasm. It catalyses the reaction L-fucose = L-fuculose. It functions in the pathway carbohydrate degradation; L-fucose degradation; L-lactaldehyde and glycerone phosphate from L-fucose: step 1/3. Converts the aldose L-fucose into the corresponding ketose L-fuculose. This is L-fucose isomerase from Streptococcus pneumoniae (strain P1031).